We begin with the raw amino-acid sequence, 216 residues long: Pyrrolidone-carboxylate peptidase (216 aa).

Active-site residues include glutamate 80, cysteine 143, and histidine 168.

It belongs to the peptidase C15 family. As to quaternary structure, homotetramer.

Its subcellular location is the cytoplasm. It catalyses the reaction Release of an N-terminal pyroglutamyl group from a polypeptide, the second amino acid generally not being Pro.. In terms of biological role, removes 5-oxoproline from various penultimate amino acid residues except L-proline. In Cupriavidus necator (strain ATCC 17699 / DSM 428 / KCTC 22496 / NCIMB 10442 / H16 / Stanier 337) (Ralstonia eutropha), this protein is Pyrrolidone-carboxylate peptidase.